The primary structure comprises 198 residues: Recombination protein RecR (198 aa).

The C4-type zinc finger occupies 57–72; the sequence is CSICGRLTDDDPCSIC. The Toprim domain maps to 80–175; the sequence is TTILVLEDSR…KVTRLARGLA (96 aa).

Belongs to the RecR family.

Its function is as follows. May play a role in DNA repair. It seems to be involved in an RecBC-independent recombinational process of DNA repair. It may act with RecF and RecO. This is Recombination protein RecR from Streptococcus pneumoniae serotype 2 (strain D39 / NCTC 7466).